We begin with the raw amino-acid sequence, 438 residues long: UDP-N-acetylglucosamine 1-carboxyvinyltransferase (438 aa).

Phosphoenolpyruvate is bound at residue 35-36; sequence KN. R105 serves as a coordination point for UDP-N-acetyl-alpha-D-glucosamine. C129 acts as the Proton donor in catalysis. C129 bears the 2-(S-cysteinyl)pyruvic acid O-phosphothioketal mark. UDP-N-acetyl-alpha-D-glucosamine-binding positions include 134-138, D321, and V343; that span reads RPVDL.

Belongs to the EPSP synthase family. MurA subfamily.

It is found in the cytoplasm. The enzyme catalyses phosphoenolpyruvate + UDP-N-acetyl-alpha-D-glucosamine = UDP-N-acetyl-3-O-(1-carboxyvinyl)-alpha-D-glucosamine + phosphate. It participates in cell wall biogenesis; peptidoglycan biosynthesis. Functionally, cell wall formation. Adds enolpyruvyl to UDP-N-acetylglucosamine. In Synechocystis sp. (strain ATCC 27184 / PCC 6803 / Kazusa), this protein is UDP-N-acetylglucosamine 1-carboxyvinyltransferase.